The primary structure comprises 675 residues: Methionine--tRNA ligase (675 aa).

The short motif at 15–25 (PYANGPIHLGH) is the 'HIGH' region element. Zn(2+)-binding residues include cysteine 146, cysteine 149, cysteine 159, and cysteine 162. A 'KMSKS' region motif is present at residues 332–336 (KMSKS). Lysine 335 lines the ATP pocket. The tRNA-binding domain maps to 574-675 (DFAKIDLRVA…AGAKPGMRVK (102 aa)).

This sequence belongs to the class-I aminoacyl-tRNA synthetase family. MetG type 1 subfamily. Homodimer. The cofactor is Zn(2+).

It localises to the cytoplasm. It catalyses the reaction tRNA(Met) + L-methionine + ATP = L-methionyl-tRNA(Met) + AMP + diphosphate. Its function is as follows. Is required not only for elongation of protein synthesis but also for the initiation of all mRNA translation through initiator tRNA(fMet) aminoacylation. The sequence is that of Methionine--tRNA ligase from Shewanella amazonensis (strain ATCC BAA-1098 / SB2B).